The chain runs to 681 residues: Peroxisomal acyl-coenzyme A oxidase 2 (681 aa).

A phosphoserine mark is found at serine 3 and serine 9. Lysine 66, lysine 137, lysine 303, lysine 453, lysine 561, and lysine 667 each carry N6-succinyllysine. Positions 679 to 681 match the Microbody targeting signal motif; that stretch reads HKM.

Belongs to the acyl-CoA oxidase family. In terms of assembly, homodimer. FAD serves as cofactor. Most abundant in liver. Also expressed in kidney. Not present in any other tissues tested.

The protein resides in the peroxisome. It catalyses the reaction (25R)-3alpha,7alpha,12alpha-trihydroxy-5beta-cholestan-26-oyl-CoA + A + H2O = (24R,25R)-3alpha,7alpha,12alpha,24-tetrahydroxy-5beta-cholestan-26-oyl-CoA + AH2. It carries out the reaction (25S)-3alpha,7alpha,12alpha-trihydroxy-5beta-cholestan-26-oyl-CoA + O2 = (24E)-3alpha,7alpha,12alpha-trihydroxy-5beta-cholest-24-en-26-oyl-CoA + H2O2. Functionally, oxidizes the CoA esters of the bile acid intermediates di- and tri-hydroxycoprostanic acids. Capable of oxidizing short as well as long chain 2-methyl branched fatty acids. The sequence is that of Peroxisomal acyl-coenzyme A oxidase 2 from Rattus norvegicus (Rat).